Here is a 912-residue protein sequence, read N- to C-terminus: Protein translocase subunit SecA (912 aa).

ATP contacts are provided by residues glutamine 87, 105–109 (GEGKT), and aspartate 509. Over residues 847 to 859 (RERAVSQPVHEDA) the composition is skewed to basic and acidic residues. Residues 847 to 912 (RERAVSQPVH…KYKHCHGKLN (66 aa)) are disordered. Residues 867–878 (AESEEASGESAD) show a composition bias toward acidic residues. A compositionally biased stretch (basic and acidic residues) spans 881-892 (QPVRRDGPKVGR). Zn(2+)-binding residues include cysteine 896, cysteine 898, cysteine 907, and histidine 908. Basic residues predominate over residues 902–912 (KKYKHCHGKLN).

Belongs to the SecA family. As to quaternary structure, monomer and homodimer. Part of the essential Sec protein translocation apparatus which comprises SecA, SecYEG and auxiliary proteins SecDF-YajC and YidC. Zn(2+) serves as cofactor.

The protein resides in the cell inner membrane. Its subcellular location is the cytoplasm. It carries out the reaction ATP + H2O + cellular proteinSide 1 = ADP + phosphate + cellular proteinSide 2.. Its function is as follows. Part of the Sec protein translocase complex. Interacts with the SecYEG preprotein conducting channel. Has a central role in coupling the hydrolysis of ATP to the transfer of proteins into and across the cell membrane, serving both as a receptor for the preprotein-SecB complex and as an ATP-driven molecular motor driving the stepwise translocation of polypeptide chains across the membrane. The polypeptide is Protein translocase subunit SecA (Chromohalobacter salexigens (strain ATCC BAA-138 / DSM 3043 / CIP 106854 / NCIMB 13768 / 1H11)).